Reading from the N-terminus, the 294-residue chain is Probable endonuclease 4 (294 aa).

Residues H78, H118, E155, D189, H192, H226, D239, H241, and E271 each contribute to the Zn(2+) site.

Belongs to the AP endonuclease 2 family. The cofactor is Zn(2+).

It carries out the reaction Endonucleolytic cleavage to 5'-phosphooligonucleotide end-products.. Endonuclease IV plays a role in DNA repair. It cleaves phosphodiester bonds at apurinic or apyrimidinic (AP) sites, generating a 3'-hydroxyl group and a 5'-terminal sugar phosphate. This chain is Probable endonuclease 4, found in Oleidesulfovibrio alaskensis (strain ATCC BAA-1058 / DSM 17464 / G20) (Desulfovibrio alaskensis).